The sequence spans 209 residues: uncharacterized protein (209 aa).

An N-terminal signal peptide occupies residues 1 to 17; that stretch reads MKRLVTGLLALSLFLAA. The interval 17–105 is disordered; sequence ACGQDSDQQK…SNNQANNNQK (89 aa). C18 carries N-palmitoyl cysteine lipidation. Residue C18 is the site of S-diacylglycerol cysteine attachment. The span at 23-70 shows a compositional bias: basic and acidic residues; that stretch reads DQQKDSNKEKDDKAKTEQQDEKTNDSSKDKKDKKDDSKDVNKDNKDNS. A compositionally biased stretch (low complexity) spans 71–105; that stretch reads ANDNQQQSNSNATNNDQNQTNNNQSSNNQANNNQK.

The protein localises to the cell membrane. This is an uncharacterized protein from Staphylococcus aureus (strain bovine RF122 / ET3-1).